We begin with the raw amino-acid sequence, 64 residues long: Large ribosomal subunit protein bL33m (64 aa).

It belongs to the bacterial ribosomal protein bL33 family. In terms of assembly, component of the mitochondrial ribosome large subunit (39S) which comprises a 16S rRNA and about 50 distinct proteins.

The protein localises to the mitochondrion. In Drosophila melanogaster (Fruit fly), this protein is Large ribosomal subunit protein bL33m (mRpL33).